The sequence spans 328 residues: tRNA U34 carboxymethyltransferase (328 aa).

Carboxy-S-adenosyl-L-methionine contacts are provided by residues lysine 91, tryptophan 105, lysine 110, glycine 130, 152–154 (DPS), methionine 196, tyrosine 200, and arginine 315.

The protein belongs to the class I-like SAM-binding methyltransferase superfamily. CmoB family. Homotetramer.

It catalyses the reaction carboxy-S-adenosyl-L-methionine + 5-hydroxyuridine(34) in tRNA = 5-carboxymethoxyuridine(34) in tRNA + S-adenosyl-L-homocysteine + H(+). In terms of biological role, catalyzes carboxymethyl transfer from carboxy-S-adenosyl-L-methionine (Cx-SAM) to 5-hydroxyuridine (ho5U) to form 5-carboxymethoxyuridine (cmo5U) at position 34 in tRNAs. This is tRNA U34 carboxymethyltransferase from Psychromonas ingrahamii (strain DSM 17664 / CCUG 51855 / 37).